The chain runs to 427 residues: Glutamate-1-semialdehyde 2,1-aminomutase (427 aa).

Lys-265 is modified (N6-(pyridoxal phosphate)lysine).

This sequence belongs to the class-III pyridoxal-phosphate-dependent aminotransferase family. HemL subfamily. In terms of assembly, homodimer. Pyridoxal 5'-phosphate is required as a cofactor.

The protein localises to the cytoplasm. The catalysed reaction is (S)-4-amino-5-oxopentanoate = 5-aminolevulinate. Its pathway is porphyrin-containing compound metabolism; protoporphyrin-IX biosynthesis; 5-aminolevulinate from L-glutamyl-tRNA(Glu): step 2/2. This Pasteurella multocida (strain Pm70) protein is Glutamate-1-semialdehyde 2,1-aminomutase.